The chain runs to 566 residues: Serine/threonine-protein kinase haspin homolog (566 aa).

In terms of domain architecture, Protein kinase spans 248–566 (LLNTKKIGEG…HCANYLFNLN (319 aa)). Residues 254-262 (IGEGAYGEV), Lys-282, 377-382 (KFAGSD), 418-423 (DLHLGN), and 456-458 (DYT) contribute to the ATP site. The Proton acceptor role is filled by Asp-418.

Belongs to the protein kinase superfamily. Ser/Thr protein kinase family. Haspin subfamily. In terms of assembly, interacts with pds5 and vtd. It depends on Mg(2+) as a cofactor.

It localises to the nucleus lamina. Its subcellular location is the chromosome. The protein resides in the cytoplasm. It is found in the cytoskeleton. The protein localises to the spindle. The enzyme catalyses L-seryl-[protein] + ATP = O-phospho-L-seryl-[protein] + ADP + H(+). It carries out the reaction L-threonyl-[protein] + ATP = O-phospho-L-threonyl-[protein] + ADP + H(+). Functionally, serine/threonine-protein kinase that phosphorylates histone H3 at 'Thr-4' (H3T3ph) during mitosis and interphase. Function is essential for chromosome organization during mitosis and genome organization in interphase cells, thus playing a functional role in gene regulation. During mitosis, may act through H3T3ph to both position and modulate activation of AURKB and other components of the chromosomal passenger complex (CPC) at centromeres to ensure proper chromatid cohesion, metaphase alignment and normal progression through the cell cycle. During interphase, associates with the cohesion complex and mediates pds5 binding to chromatin to ensure correct sister chromatid cohesion, chromatin organization, and also functions with Pds5-cohesin to modify Polycomb-dependent homeotic transformations. Function during interphase is required for insulator activity, nuclear compaction, heterochromatin-induced position-effect variegation and PcG-mediated pairing-sensitive silencing. The protein is Serine/threonine-protein kinase haspin homolog of Drosophila melanogaster (Fruit fly).